The following is a 72-amino-acid chain: UPF0270 protein Ent638_3781 (72 aa).

This sequence belongs to the UPF0270 family.

The chain is UPF0270 protein Ent638_3781 from Enterobacter sp. (strain 638).